Consider the following 268-residue polypeptide: Octanoyltransferase (268 aa).

In terms of domain architecture, BPL/LPL catalytic spans 47–243 (PETPDQVWLV…ALCEVLAAHE (197 aa)). Residues 87 to 94 (RGGQITYH), 159 to 161 (ALG), and 172 to 174 (GVS) contribute to the substrate site. Cysteine 190 functions as the Acyl-thioester intermediate in the catalytic mechanism.

Belongs to the LipB family.

It is found in the cytoplasm. It catalyses the reaction octanoyl-[ACP] + L-lysyl-[protein] = N(6)-octanoyl-L-lysyl-[protein] + holo-[ACP] + H(+). It functions in the pathway protein modification; protein lipoylation via endogenous pathway; protein N(6)-(lipoyl)lysine from octanoyl-[acyl-carrier-protein]: step 1/2. Catalyzes the transfer of endogenously produced octanoic acid from octanoyl-acyl-carrier-protein onto the lipoyl domains of lipoate-dependent enzymes. Lipoyl-ACP can also act as a substrate although octanoyl-ACP is likely to be the physiological substrate. In Cupriavidus necator (strain ATCC 17699 / DSM 428 / KCTC 22496 / NCIMB 10442 / H16 / Stanier 337) (Ralstonia eutropha), this protein is Octanoyltransferase.